The primary structure comprises 433 residues: UPF0597 protein PG_0909 (433 aa).

This sequence belongs to the UPF0597 family.

In Porphyromonas gingivalis (strain ATCC BAA-308 / W83), this protein is UPF0597 protein PG_0909.